Reading from the N-terminus, the 123-residue chain is Small ribosomal subunit protein uS13 (123 aa).

A disordered region spans residues 97-123; the sequence is PCRGQRTHTNSRTRKGPRRGVMAKKKK.

Belongs to the universal ribosomal protein uS13 family. Part of the 30S ribosomal subunit. Forms a loose heterodimer with protein S19. Forms two bridges to the 50S subunit in the 70S ribosome.

Its function is as follows. Located at the top of the head of the 30S subunit, it contacts several helices of the 16S rRNA. In the 70S ribosome it contacts the 23S rRNA (bridge B1a) and protein L5 of the 50S subunit (bridge B1b), connecting the 2 subunits; these bridges are implicated in subunit movement. Contacts the tRNAs in the A and P-sites. In Solidesulfovibrio magneticus (strain ATCC 700980 / DSM 13731 / RS-1) (Desulfovibrio magneticus), this protein is Small ribosomal subunit protein uS13.